The sequence spans 106 residues: Large ribosomal subunit protein uL30 (106 aa).

Belongs to the universal ribosomal protein uL30 family. In terms of assembly, part of the 50S ribosomal subunit.

The sequence is that of Large ribosomal subunit protein uL30 from Ruthia magnifica subsp. Calyptogena magnifica.